We begin with the raw amino-acid sequence, 377 residues long: Heat stress transcription factor B-2b (377 aa).

The disordered stretch occupies residues 1 to 56 (MPGEQTGETPTVAGVGGGGAGCSAGNSGGSSGCGAGGGGGGSGGGGGGGGDSQRSI). Over residues 14–51 (GVGGGGAGCSAGNSGGSSGCGAGGGGGGSGGGGGGGGD) the composition is skewed to gly residues. The DNA-binding element occupies 57 to 151 (PTPFLTKTYQ…LLRDIQRRKI (95 aa)). The tract at residues 220–265 (TTSCTTAPELVEENERLRKDNERLRKEMTKLKGLYANIYTLMANFT) is hydrophobic repeat HR-A/B. The Nuclear localization signal motif lies at 323–327 (KRARR). A disordered region spans residues 326–377 (RREEELGAAEEEDDDRREAAAQEGEQSSDVKAEPMEENNSGNHNGSWLELGK). Acidic residues predominate over residues 331 to 340 (LGAAEEEDDD).

Belongs to the HSF family. Class B subfamily. In terms of assembly, homotrimer. In terms of processing, exhibits temperature-dependent phosphorylation.

The protein resides in the nucleus. Its function is as follows. Transcriptional regulator that specifically binds DNA sequence 5'-AGAAnnTTCT-3' known as heat shock promoter elements (HSE). This is Heat stress transcription factor B-2b (HSFB2B) from Arabidopsis thaliana (Mouse-ear cress).